Here is a 432-residue protein sequence, read N- to C-terminus: Nuclear pore complex-interacting protein family member B8 (432 aa).

Disordered stretches follow at residues 260 to 280 (RMGR…NSLS) and 353 to 420 (SPLP…LRTR). Over residues 270 to 280 (QQHSITDNSLS) the composition is skewed to polar residues. The segment covering 374-402 (EVEKPPKPKRWRVDEVEQSPKPKRQREAE) has biased composition (basic and acidic residues). Residues 408–420 (KPKRRRLSKLRTR) are compositionally biased toward basic residues.

Belongs to the NPIP family.

The chain is Nuclear pore complex-interacting protein family member B8 (NPIPB8) from Homo sapiens (Human).